Consider the following 1309-residue polypeptide: DNA repair protein RAD9 (1309 aa).

Residues 1-19 (MSGQLVQWKSSPDRVTQSA) are compositionally biased toward polar residues. The interval 1–39 (MSGQLVQWKSSPDRVTQSAIKEALHSPLADGDMNEMNVP) is disordered. 3 positions are modified to phosphoserine: Ser26, Ser56, and Ser205. The residue at position 218 (Thr218) is a Phosphothreonine. The residue at position 248 (Ser248) is a Phosphoserine. The disordered stretch occupies residues 280–299 (NIGAIEEKNPVKKKSENYSS). Positions 284 to 299 (IEEKNPVKKKSENYSS) are enriched in basic and acidic residues. Ser312 and Ser315 each carry phosphoserine. A disordered region spans residues 342 to 365 (NSAVSGTPSRNNAEEEMYSSESVN). Residues 343 to 352 (SAVSGTPSRN) show a composition bias toward polar residues. Ser462 carries the post-translational modification Phosphoserine. Residues Thr471 and Thr474 each carry the phosphothreonine modification. Positions 490 to 512 (PETSSPSKNTMSKPSNSSPIPKE) are disordered. Residues 491–508 (ETSSPSKNTMSKPSNSSP) are compositionally biased toward polar residues. Ser568 is subject to Phosphoserine. Disordered regions lie at residues 636–655 (KGNS…DKQD) and 691–731 (IIQN…NSDL). The segment covering 642 to 655 (LHDDNKECNSDKQD) has biased composition (basic and acidic residues). At Ser729 the chain carries Phosphoserine. Residues 994–1122 (RTGNVFDKCI…RIVPHLIYQY (129 aa)) enclose the BRCT domain.

Physically associates with RAD53.

Its subcellular location is the nucleus. In terms of biological role, essential for cell cycle arrest at the G2 stage following DNA damage by X-irradiation or inactivation of DNA ligase. The polypeptide is DNA repair protein RAD9 (RAD9) (Saccharomyces cerevisiae (strain ATCC 204508 / S288c) (Baker's yeast)).